We begin with the raw amino-acid sequence, 187 residues long: Capsid protein (187 aa).

The tract at residues 150–187 (RRGGARASRSPRRRTPSPRRRRSQSPRRRRSQSPSANC) is disordered. The segment covering 158-180 (RSPRRRTPSPRRRRSQSPRRRRS) has biased composition (basic residues). Phosphoserine; by host occurs at positions 159, 166, and 174. A 1; half-length repeat occupies 159 to 165 (SPRRRTP). A 3 X 8 AA repeats of S-P-R-R-R-[PR]-S-Q region spans residues 159 to 181 (SPRRRTPSPRRRRSQSPRRRRSQ). The short motif at 162 to 179 (RRTPSPRRRRSQSPRRRR) is the Bipartite nuclear localization signal element. Tandem repeats lie at residues 166-173 (SPRRRRSQ) and 174-181 (SPRRRRSQ). The segment at 181–187 (QSPSANC) is RNA binding.

Belongs to the orthohepadnavirus core antigen family. Homodimerizes, then multimerizes. Interacts with cytosol exposed regions of viral L glycoprotein present in the reticulum-to-Golgi compartment. Interacts with human FLNB. Phosphorylated form interacts with host importin alpha; this interaction depends on the exposure of the NLS, which itself depends upon genome maturation and/or phosphorylation of the capsid protein. Interacts with host NUP153. Post-translationally, phosphorylated by host SRPK1, SRPK2, and maybe protein kinase C or GAPDH. Phosphorylation is critical for pregenomic RNA packaging. Protein kinase C phosphorylation is stimulated by HBx protein and may play a role in transport of the viral genome to the nucleus at the late step during the viral replication cycle.

It is found in the virion. The protein localises to the host cytoplasm. Self assembles to form an icosahedral capsid. Most capsids appear to be large particles with an icosahedral symmetry of T=4 and consist of 240 copies of capsid protein, though a fraction forms smaller T=3 particles consisting of 180 capsid proteins. Entering capsids are transported along microtubules to the nucleus. Phosphorylation of the capsid is thought to induce exposure of nuclear localization signal in the C-terminal portion of the capsid protein that allows binding to the nuclear pore complex via the importin (karyopherin-) alpha and beta. Capsids are imported in intact form through the nuclear pore into the nuclear basket, where it probably binds NUP153. Only capsids that contain the mature viral genome can release the viral DNA and capsid protein into the nucleoplasm. Immature capsids get stuck in the basket. Capsids encapsulate the pre-genomic RNA and the P protein. Pre-genomic RNA is reverse-transcribed into DNA while the capsid is still in the cytoplasm. The capsid can then either be directed to the nucleus, providing more genomes for transcription, or bud through the endoplasmic reticulum to provide new virions. This chain is Capsid protein, found in Marmota monax (Woodchuck).